We begin with the raw amino-acid sequence, 483 residues long: UDP-N-acetylmuramyl-tripeptide synthetase (483 aa).

A UDP-N-acetyl-alpha-D-muramoyl-L-alanyl-D-glutamate-binding site is contributed by Ser43. Position 116–122 (116–122 (GTKGKTT)) interacts with ATP. UDP-N-acetyl-alpha-D-muramoyl-L-alanyl-D-glutamate is bound by residues 160 to 161 (TT), Ser187, and Arg195. Lys229 carries the N6-carboxylysine modification.

The protein belongs to the MurCDEF family. MurE subfamily. Post-translationally, carboxylation is probably crucial for Mg(2+) binding and, consequently, for the gamma-phosphate positioning of ATP.

Its subcellular location is the cytoplasm. Its pathway is cell wall biogenesis; peptidoglycan biosynthesis. Functionally, catalyzes the addition of an amino acid to the nucleotide precursor UDP-N-acetylmuramoyl-L-alanyl-D-glutamate (UMAG) in the biosynthesis of bacterial cell-wall peptidoglycan. This is UDP-N-acetylmuramyl-tripeptide synthetase from Lactococcus lactis subsp. cremoris (strain MG1363).